We begin with the raw amino-acid sequence, 87 residues long: Small ribosomal subunit protein uS17 (87 aa).

The protein belongs to the universal ribosomal protein uS17 family. Part of the 30S ribosomal subunit.

One of the primary rRNA binding proteins, it binds specifically to the 5'-end of 16S ribosomal RNA. This chain is Small ribosomal subunit protein uS17, found in Staphylococcus haemolyticus (strain JCSC1435).